The sequence spans 834 residues: MAP kinase phosphatase with leucine-rich repeats protein 1 (834 aa).

Positions 1–103 (MIFKKLFSKG…GSGTTKESKK (103 aa)) are disordered. The segment covering 36–78 (GSGTNTNGLSNSTTNPSSIHSTPTTPTTTASTNLTNSNKLSTL) has biased composition (low complexity). The span at 79-98 (APITNGNRSLRGSKDGSGTT) shows a compositional bias: polar residues. LRR repeat units follow at residues 160 to 181 (ELRS…IGLL), 183 to 204 (NLKH…LSQL), 206 to 226 (SLES…NICK), 229 to 251 (SLTL…INLE), 252 to 273 (NLKD…LPNN), 274 to 292 (IEKL…SKSL), 298 to 319 (SLTT…LSCL), 321 to 342 (NVKT…VLGS), 345 to 366 (SLVT…IVTL), and 368 to 389 (NLRI…PSSE). The segment at 503–584 (YEKQENDENN…ENPLKESQGK (82 aa)) is disordered. Residues 511–536 (NNSVTLETTTTISIASDNTDEASIQI) are compositionally biased toward polar residues. 2 stretches are compositionally biased toward basic and acidic residues: residues 538-554 (QKED…DKLL) and 569-582 (KQQE…KESQ). Positions 555–615 (QESFSENNNN…IRLEKIKYQE (61 aa)) form a coiled coil. Positions 695–834 (VPDLIIDKLY…LKKFEKDLSK (140 aa)) constitute a Tyrosine-protein phosphatase domain. The Phosphocysteine intermediate role is filled by C778.

It belongs to the protein-tyrosine phosphatase family. Non-receptor class dual specificity subfamily.

The catalysed reaction is O-phospho-L-tyrosyl-[protein] + H2O = L-tyrosyl-[protein] + phosphate. It catalyses the reaction O-phospho-L-seryl-[protein] + H2O = L-seryl-[protein] + phosphate. It carries out the reaction O-phospho-L-threonyl-[protein] + H2O = L-threonyl-[protein] + phosphate. Functionally, probable phosphatase with dual specificity toward Ser/Thr and Tyr-containing proteins. Dephosphorylates pNPP, in vitro. Essential for proper regulation of erkB (erk2) and optimal motility during development. This is MAP kinase phosphatase with leucine-rich repeats protein 1 (mpl1) from Dictyostelium discoideum (Social amoeba).